Here is a 479-residue protein sequence, read N- to C-terminus: U6 small nuclear RNA (adenine-(43)-N(6))-methyltransferase (479 aa).

S-adenosyl-L-methionine-binding residues include lysine 82, glycine 108, aspartate 131, threonine 164, and asparagine 184. Positions 420–424 (DNASQ) are involved in dlc-1 binding.

This sequence belongs to the methyltransferase superfamily. METTL16/RlmF family. As to quaternary structure, self-associates. Interacts with dlc-1; the interaction is direct, and is required for nuclear localization of mett-10. In terms of tissue distribution, expressed in the intestine, vulva, and cells of the somatic gonad including distal tip cells, gonadal sheath cells and spermatheca.

It localises to the nucleus. It carries out the reaction an adenosine in mRNA + S-adenosyl-L-methionine = an N(6)-methyladenosine in mRNA + S-adenosyl-L-homocysteine + H(+). It catalyses the reaction adenosine in U6 snRNA + S-adenosyl-L-methionine = N(6)-methyladenosine in U6 snRNA + S-adenosyl-L-homocysteine + H(+). In terms of biological role, RNA N6-methyltransferase that methylates adenosine residues at the N(6) position of a subset of RNAs and is involved in S-adenosyl-L-methionine homeostasis by regulating splicing of S-adenosylmethionine synthase transcripts (sams-3, sams-4 and sams-5). Able to N6-methylate a subset of mRNAs containing the 5'UACAGAAAC-3' nonamer sequence. Plays a key role in S-adenosyl-L-methionine homeostasis: under rich-diet conditions, catalyzes N6-methylation of S-adenosylmethionine synthase mRNAs (sams-3, sams-4 and sams-5), directly inhibiting splicing and protein production of S-adenosylmethionine synthase. In addition to mRNAs, also able to mediate N6-methylation of U6 small nuclear RNA (U6 snRNA). Required for gamete production, inhibiting germ cell proliferative fate and ensuring germ cell meiotic development. Also promotes progression of the mitotic cell cycle in those germ cells that continue to proliferate. Plays a role in the development of the vulva, somatic gonad and embryo. This Caenorhabditis elegans protein is U6 small nuclear RNA (adenine-(43)-N(6))-methyltransferase.